The sequence spans 140 residues: Nucleoside diphosphate kinase (140 aa).

Residues lysine 11, phenylalanine 59, arginine 87, threonine 93, arginine 104, and asparagine 114 each contribute to the ATP site. Histidine 117 (pros-phosphohistidine intermediate) is an active-site residue.

Belongs to the NDK family. As to quaternary structure, homotetramer. Mg(2+) serves as cofactor.

The protein localises to the cytoplasm. It carries out the reaction a 2'-deoxyribonucleoside 5'-diphosphate + ATP = a 2'-deoxyribonucleoside 5'-triphosphate + ADP. It catalyses the reaction a ribonucleoside 5'-diphosphate + ATP = a ribonucleoside 5'-triphosphate + ADP. Major role in the synthesis of nucleoside triphosphates other than ATP. The ATP gamma phosphate is transferred to the NDP beta phosphate via a ping-pong mechanism, using a phosphorylated active-site intermediate. This Rickettsia typhi (strain ATCC VR-144 / Wilmington) protein is Nucleoside diphosphate kinase.